We begin with the raw amino-acid sequence, 861 residues long: Leucine--tRNA ligase (861 aa).

A 'HIGH' region motif is present at residues 42-52; it reads PYPSGKLHMGH. The short motif at 619-623 is the 'KMSKS' region element; the sequence is KMSKS. Lys-622 contributes to the ATP binding site.

The protein belongs to the class-I aminoacyl-tRNA synthetase family.

It localises to the cytoplasm. The catalysed reaction is tRNA(Leu) + L-leucine + ATP = L-leucyl-tRNA(Leu) + AMP + diphosphate. This Actinobacillus pleuropneumoniae serotype 5b (strain L20) protein is Leucine--tRNA ligase.